A 107-amino-acid polypeptide reads, in one-letter code: uncharacterized protein (107 aa).

A helical transmembrane segment spans residues 9–31 (AAAIITAPTILAMMSTVLRALIF).

It localises to the membrane. This is an uncharacterized protein from Archaeoglobus fulgidus (strain ATCC 49558 / DSM 4304 / JCM 9628 / NBRC 100126 / VC-16).